A 278-amino-acid polypeptide reads, in one-letter code: Bifunctional protein FolD (278 aa).

NADP(+) is bound by residues G165–S167, S190, and T231.

It belongs to the tetrahydrofolate dehydrogenase/cyclohydrolase family. Homodimer.

The enzyme catalyses (6R)-5,10-methylene-5,6,7,8-tetrahydrofolate + NADP(+) = (6R)-5,10-methenyltetrahydrofolate + NADPH. It carries out the reaction (6R)-5,10-methenyltetrahydrofolate + H2O = (6R)-10-formyltetrahydrofolate + H(+). The protein operates within one-carbon metabolism; tetrahydrofolate interconversion. Catalyzes the oxidation of 5,10-methylenetetrahydrofolate to 5,10-methenyltetrahydrofolate and then the hydrolysis of 5,10-methenyltetrahydrofolate to 10-formyltetrahydrofolate. This chain is Bifunctional protein FolD, found in Clostridium novyi (strain NT).